A 197-amino-acid polypeptide reads, in one-letter code: Ras-like protein rasB (197 aa).

13-20 (GGGGVGKS) contacts GTP. The short motif at 35-43 (YDPTIEDSY) is the Effector region element. GTP contacts are provided by residues 60–64 (DTAGQ) and 119–122 (NKCD). A Cysteine methyl ester modification is found at cysteine 194. Residue cysteine 194 is the site of S-geranylgeranyl cysteine attachment. Positions 195–197 (LIL) are cleaved as a propeptide — removed in mature form.

It belongs to the small GTPase superfamily. Ras family.

The protein localises to the cell membrane. The catalysed reaction is GTP + H2O = GDP + phosphate + H(+). With respect to regulation, alternates between an inactive form bound to GDP and an active form bound to GTP. Activated by a guanine nucleotide-exchange factor (GEF) and inactivated by a GTPase-activating protein (GAP). Its function is as follows. Ras proteins bind GDP/GTP and possess intrinsic GTPase activity. The protein is Ras-like protein rasB (rasB) of Dictyostelium discoideum (Social amoeba).